Reading from the N-terminus, the 362-residue chain is 3-dehydroquinate synthase (362 aa).

It belongs to the archaeal-type DHQ synthase family.

It carries out the reaction 2-amino-2,3,7-trideoxy-D-lyxo-hept-6-ulosonate + NAD(+) + H2O = 3-dehydroquinate + NH4(+) + NADH + H(+). Functionally, catalyzes the oxidative deamination and cyclization of 2-amino-3,7-dideoxy-D-threo-hept-6-ulosonic acid (ADH) to yield 3-dehydroquinate (DHQ), which is fed into the canonical shikimic pathway of aromatic amino acid biosynthesis. The polypeptide is 3-dehydroquinate synthase (Methanococcus aeolicus (strain ATCC BAA-1280 / DSM 17508 / OCM 812 / Nankai-3)).